The following is a 145-amino-acid chain: D-aminoacyl-tRNA deacylase (145 aa).

The Gly-cisPro motif, important for rejection of L-amino acids motif lies at Gly-137–Pro-138.

This sequence belongs to the DTD family. Homodimer.

The protein localises to the cytoplasm. The catalysed reaction is glycyl-tRNA(Ala) + H2O = tRNA(Ala) + glycine + H(+). The enzyme catalyses a D-aminoacyl-tRNA + H2O = a tRNA + a D-alpha-amino acid + H(+). An aminoacyl-tRNA editing enzyme that deacylates mischarged D-aminoacyl-tRNAs. Also deacylates mischarged glycyl-tRNA(Ala), protecting cells against glycine mischarging by AlaRS. Acts via tRNA-based rather than protein-based catalysis; rejects L-amino acids rather than detecting D-amino acids in the active site. By recycling D-aminoacyl-tRNA to D-amino acids and free tRNA molecules, this enzyme counteracts the toxicity associated with the formation of D-aminoacyl-tRNA entities in vivo and helps enforce protein L-homochirality. The chain is D-aminoacyl-tRNA deacylase from Shigella dysenteriae serotype 1 (strain Sd197).